The following is a 122-amino-acid chain: Large ribosomal subunit protein uL14 (122 aa).

This sequence belongs to the universal ribosomal protein uL14 family. In terms of assembly, part of the 50S ribosomal subunit. Forms a cluster with proteins L3 and L19. In the 70S ribosome, L14 and L19 interact and together make contacts with the 16S rRNA in bridges B5 and B8.

In terms of biological role, binds to 23S rRNA. Forms part of two intersubunit bridges in the 70S ribosome. The protein is Large ribosomal subunit protein uL14 of Chlamydia muridarum (strain MoPn / Nigg).